Here is a 408-residue protein sequence, read N- to C-terminus: Adenylosuccinate synthetase (408 aa).

GTP-binding positions include 12–18 (GDEGKGK) and 40–42 (GHT). D13 serves as the catalytic Proton acceptor. The Mg(2+) site is built by D13 and G40. IMP contacts are provided by residues 13–16 (DEGK), 38–41 (NAGH), T121, R135, Q213, T228, and R292. H41 acts as the Proton donor in catalysis. 288-294 (TTTGRPR) provides a ligand contact to substrate. Residues R294, 320–322 (KLD), and 393–395 (STS) contribute to the GTP site.

It belongs to the adenylosuccinate synthetase family. In terms of assembly, homodimer. Requires Mg(2+) as cofactor.

It is found in the cytoplasm. It catalyses the reaction IMP + L-aspartate + GTP = N(6)-(1,2-dicarboxyethyl)-AMP + GDP + phosphate + 2 H(+). Its pathway is purine metabolism; AMP biosynthesis via de novo pathway; AMP from IMP: step 1/2. In terms of biological role, plays an important role in the de novo pathway of purine nucleotide biosynthesis. Catalyzes the first committed step in the biosynthesis of AMP from IMP. This is Adenylosuccinate synthetase from Thermus thermophilus (strain ATCC BAA-163 / DSM 7039 / HB27).